The sequence spans 286 residues: uncharacterized protein (286 aa).

The region spanning 1-58 (MLLEGIETLLVLSKEKTMSRTGSQLYISQSAVSKRIANLEKKLGKKLIVPAGRHIKLT) is the HTH lysR-type domain. Residues 18–37 (MSRTGSQLYISQSAVSKRIA) constitute a DNA-binding region (H-T-H motif).

It belongs to the LysR transcriptional regulatory family.

This is an uncharacterized protein from Vibrio cholerae serotype O1 (strain ATCC 39315 / El Tor Inaba N16961).